Here is a 380-residue protein sequence, read N- to C-terminus: 4-hydroxy-3-methylbut-2-en-1-yl diphosphate synthase (flavodoxin) (380 aa).

Residues cysteine 275, cysteine 278, cysteine 310, and glutamate 317 each coordinate [4Fe-4S] cluster.

Belongs to the IspG family. [4Fe-4S] cluster is required as a cofactor.

The catalysed reaction is (2E)-4-hydroxy-3-methylbut-2-enyl diphosphate + oxidized [flavodoxin] + H2O + 2 H(+) = 2-C-methyl-D-erythritol 2,4-cyclic diphosphate + reduced [flavodoxin]. The protein operates within isoprenoid biosynthesis; isopentenyl diphosphate biosynthesis via DXP pathway; isopentenyl diphosphate from 1-deoxy-D-xylulose 5-phosphate: step 5/6. Its function is as follows. Converts 2C-methyl-D-erythritol 2,4-cyclodiphosphate (ME-2,4cPP) into 1-hydroxy-2-methyl-2-(E)-butenyl 4-diphosphate. This Hyphomonas neptunium (strain ATCC 15444) protein is 4-hydroxy-3-methylbut-2-en-1-yl diphosphate synthase (flavodoxin).